Reading from the N-terminus, the 926-residue chain is ABC transporter A family member 6 (926 aa).

The next 6 helical transmembrane spans lie at 34–54, 336–356, 389–409, 418–438, 451–471, and 525–545; these read LIVI…VFDS, ASLI…PVIL, FLAI…AIGL, TIQF…AFLV, VAYI…QFLI, and DEVF…TYYI. In terms of domain architecture, ABC transporter spans 610–847; it reads IVCDNLKKVY…YGGSYVLTIT (238 aa). 648 to 655 contributes to the ATP binding site; sequence GPNGAGKT.

This sequence belongs to the ABC transporter superfamily. ABCA family. CPR flippase (TC 3.A.1.211) subfamily.

The protein localises to the membrane. The chain is ABC transporter A family member 6 (ABCA6) from Arabidopsis thaliana (Mouse-ear cress).